The primary structure comprises 59 residues: UPF0181 protein YoaH (59 aa).

This sequence belongs to the UPF0181 family.

The protein is UPF0181 protein YoaH of Salmonella arizonae (strain ATCC BAA-731 / CDC346-86 / RSK2980).